The following is a 555-amino-acid chain: MARVEL domain-containing protein 2 (555 aa).

The span at M1 to R20 shows a compositional bias: basic and acidic residues. Residues M1–A71 form a disordered region. The Cytoplasmic portion of the chain corresponds to M1 to R191. A compositionally biased stretch (pro residues) spans P46 to G59. Phosphoserine is present on residues S117, S121, and S158. The tract at residues P118–N142 is disordered. The residue at position 163 (T163) is a Phosphothreonine. An MARVEL domain is found at S185–R364. Residues I192–I212 traverse the membrane as a helical segment. Residues H213–P251 lie on the Extracellular side of the membrane. A helical transmembrane segment spans residues F252 to M272. The Cytoplasmic portion of the chain corresponds to S273–L288. The helical transmembrane segment at T289–V309 threads the bilayer. Residues N310 to Q338 are Extracellular-facing. A helical transmembrane segment spans residues I339–C359. Over L360–P555 the chain is Cytoplasmic. Position 384 is a phosphoserine (S384). K408 participates in a covalent cross-link: Glycyl lysine isopeptide (Lys-Gly) (interchain with G-Cter in ubiquitin). Residues P437–N548 enclose the OCEL domain. Residues E521 to K545 are a coiled coil.

This sequence belongs to the ELL/occludin family. As to quaternary structure, interacts with TJP1. Interacts with the ubiquitin ligase ITCH. Interacts (via C-terminal cytoplasmic domain) with LSR (via the cytoplasmic domain), ILDR1 and ILDR2; the interaction is required to recruit MARVELD2 to tricellular contacts. In terms of processing, ubiquitinated by ITCH; but this ubiquitination does not lead to proteasomal degradation. Polyubiquitinated at Lys-408 via 'Lys-63'-linked ubiquitin chains; deubiquitinated by USP53. Phosphorylated. As to expression, detected in small intestine, stomach and kidney, in epithelial cells. Detected in pancreas, retina and lung, and in stria vascularis, utricle and the organ of Conti in the inner ear (at protein level). Predominantly detected in small intestine, lung and kidney, with lower levels in liver, testis and brain. In colon, expressed in the entire crypts.

It localises to the cell membrane. Its subcellular location is the cell junction. It is found in the tight junction. Plays a role in the formation of tricellular tight junctions and of epithelial barriers. Required for normal hearing via its role in the separation of the endolymphatic and perilymphatic spaces of the organ of Corti in the inner ear, and for normal survival of hair cells in the organ of Corti. This is MARVEL domain-containing protein 2 from Mus musculus (Mouse).